The following is a 587-amino-acid chain: Probable pectinesterase/pectinesterase inhibitor 61 (587 aa).

Residues 1–23 (MGYDRLGPSGPSNPNQKDPATSL) form a disordered region. Residues 10 to 19 (GPSNPNQKDP) show a composition bias toward polar residues. A helical membrane pass occupies residues 35-55 (ILFTLAVLVVGVVCFGIFAGI). The interval 69 to 223 (RKPTQAISRT…SEMVSNCLAI (155 aa)) is pectinesterase inhibitor 61. The tract at residues 273 to 571 (DITVSKDGSG…FTVAQFISGS (299 aa)) is pectinesterase 61. Substrate contacts are provided by Thr349 and Gln379. The active-site Proton donor; for pectinesterase activity is Asp402. Cys416 and Cys436 are joined by a disulfide. The Nucleophile; for pectinesterase activity role is filled by Asp423. Arg491 and Trp493 together coordinate substrate.

It in the N-terminal section; belongs to the PMEI family. This sequence in the C-terminal section; belongs to the pectinesterase family. Expressed in siliques, floral stems and rosettes leaves.

It localises to the membrane. The catalysed reaction is [(1-&gt;4)-alpha-D-galacturonosyl methyl ester](n) + n H2O = [(1-&gt;4)-alpha-D-galacturonosyl](n) + n methanol + n H(+). The protein operates within glycan metabolism; pectin degradation; 2-dehydro-3-deoxy-D-gluconate from pectin: step 1/5. Acts in the modification of cell walls via demethylesterification of cell wall pectin. The sequence is that of Probable pectinesterase/pectinesterase inhibitor 61 (PME61) from Arabidopsis thaliana (Mouse-ear cress).